We begin with the raw amino-acid sequence, 429 residues long: MSLKLEVKTEIKLDYQDFQNQINEFHKRINDKNSPDIIFLGWNNFPEVAINPQEIARMRKIVENLHQNSINVLVVIGIGGSYLGAKAALDFILGLGPFENKPEVIFLGNSLSSTDLYQKIEYLKTKNFAINVISKSGSTIEPAITFQILYQFLIDQIGEKLAKTRTFVTTSIKSGELLEIAKSNELEIFEVIESIGGRFSVLSSVGFFPLLFAKINVDEIIQGAIKAHKKYSTSSISQNLAYKYALFRFLMYKNFNYKTEILISYEPFLIYFNEWWKQLFGESEGKNLKGLFPASAIFTTDLHSLGQFIQDGSKNFFQTIIYIKKPKFDLGIKKLVQFNTKINKLSGKTVSEINFQAFLATTLAHSSYGNNPNLVLEIADSSPKTFGHLVMFFEKACAMSAYLLGVNPFDQPGVESYKNELAKNLGWDR.

Glu-282 serves as the catalytic Proton donor. Catalysis depends on residues His-303 and Lys-418.

The protein belongs to the GPI family.

The protein resides in the cytoplasm. It catalyses the reaction alpha-D-glucose 6-phosphate = beta-D-fructose 6-phosphate. The protein operates within carbohydrate biosynthesis; gluconeogenesis. Its pathway is carbohydrate degradation; glycolysis; D-glyceraldehyde 3-phosphate and glycerone phosphate from D-glucose: step 2/4. Functionally, catalyzes the reversible isomerization of glucose-6-phosphate to fructose-6-phosphate. In Mesomycoplasma hyopneumoniae (strain 232) (Mycoplasma hyopneumoniae), this protein is Glucose-6-phosphate isomerase.